Here is a 514-residue protein sequence, read N- to C-terminus: Anthranilate synthase component 1 (514 aa).

L-tryptophan-binding positions include T40 and 290–292 (PYM). 327–328 (GT) is a binding site for chorismate. E360 is a binding site for Mg(2+). Residues Y448, R468, 482–484 (GAG), and G484 contribute to the chorismate site. E497 lines the Mg(2+) pocket.

Belongs to the anthranilate synthase component I family. In terms of assembly, heterotetramer consisting of two non-identical subunits: a beta subunit (TrpG) and a large alpha subunit (TrpE). It depends on Mg(2+) as a cofactor.

It carries out the reaction chorismate + L-glutamine = anthranilate + pyruvate + L-glutamate + H(+). Its pathway is amino-acid biosynthesis; L-tryptophan biosynthesis; L-tryptophan from chorismate: step 1/5. Feedback inhibited by tryptophan. Part of a heterotetrameric complex that catalyzes the two-step biosynthesis of anthranilate, an intermediate in the biosynthesis of L-tryptophan. In the first step, the glutamine-binding beta subunit (TrpG) of anthranilate synthase (AS) provides the glutamine amidotransferase activity which generates ammonia as a substrate that, along with chorismate, is used in the second step, catalyzed by the large alpha subunit of AS (TrpE) to produce anthranilate. In the absence of TrpG, TrpE can synthesize anthranilate directly from chorismate and high concentrations of ammonia. This chain is Anthranilate synthase component 1 (trpE), found in Buchnera aphidicola subsp. Rhopalosiphum padi.